The following is a 487-amino-acid chain: Siroheme synthase (487 aa).

Positions 1 to 203 are precorrin-2 dehydrogenase /sirohydrochlorin ferrochelatase; the sequence is MNTFPLFFKL…GRSVEAEQAL (203 aa). NAD(+) contacts are provided by residues 22 to 23 and 43 to 44; these read EV and PQ. Ser128 bears the Phosphoserine mark. A uroporphyrinogen-III C-methyltransferase region spans residues 229–487; it reads GEVYIVGAGP…DQQAHALNML (259 aa). Pro238 lines the S-adenosyl-L-methionine pocket. The active-site Proton acceptor is the Asp261. Residue Lys283 is the Proton donor of the active site. S-adenosyl-L-methionine is bound by residues 314-316, Val319, 344-345, Met396, and Ala425; these read GGD and TA.

In the N-terminal section; belongs to the precorrin-2 dehydrogenase / sirohydrochlorin ferrochelatase family. This sequence in the C-terminal section; belongs to the precorrin methyltransferase family.

It catalyses the reaction uroporphyrinogen III + 2 S-adenosyl-L-methionine = precorrin-2 + 2 S-adenosyl-L-homocysteine + H(+). It carries out the reaction precorrin-2 + NAD(+) = sirohydrochlorin + NADH + 2 H(+). The enzyme catalyses siroheme + 2 H(+) = sirohydrochlorin + Fe(2+). Its pathway is cofactor biosynthesis; adenosylcobalamin biosynthesis; precorrin-2 from uroporphyrinogen III: step 1/1. It participates in cofactor biosynthesis; adenosylcobalamin biosynthesis; sirohydrochlorin from precorrin-2: step 1/1. It functions in the pathway porphyrin-containing compound metabolism; siroheme biosynthesis; precorrin-2 from uroporphyrinogen III: step 1/1. The protein operates within porphyrin-containing compound metabolism; siroheme biosynthesis; siroheme from sirohydrochlorin: step 1/1. Its pathway is porphyrin-containing compound metabolism; siroheme biosynthesis; sirohydrochlorin from precorrin-2: step 1/1. Functionally, multifunctional enzyme that catalyzes the SAM-dependent methylations of uroporphyrinogen III at position C-2 and C-7 to form precorrin-2 via precorrin-1. Then it catalyzes the NAD-dependent ring dehydrogenation of precorrin-2 to yield sirohydrochlorin. Finally, it catalyzes the ferrochelation of sirohydrochlorin to yield siroheme. The chain is Siroheme synthase from Psychrobacter sp. (strain PRwf-1).